The sequence spans 161 residues: Phosphopantetheine adenylyltransferase (161 aa).

Substrate is bound at residue Ser9. ATP is bound by residues 9 to 10 and His17; that span reads SF. Lys41, Thr74, and Arg88 together coordinate substrate. ATP contacts are provided by residues 89 to 91, Glu99, and 124 to 130; these read GVR and NSFVASS.

This sequence belongs to the bacterial CoaD family. Homohexamer. It depends on Mg(2+) as a cofactor.

Its subcellular location is the cytoplasm. It carries out the reaction (R)-4'-phosphopantetheine + ATP + H(+) = 3'-dephospho-CoA + diphosphate. It functions in the pathway cofactor biosynthesis; coenzyme A biosynthesis; CoA from (R)-pantothenate: step 4/5. Reversibly transfers an adenylyl group from ATP to 4'-phosphopantetheine, yielding dephospho-CoA (dPCoA) and pyrophosphate. This chain is Phosphopantetheine adenylyltransferase, found in Lactobacillus acidophilus (strain ATCC 700396 / NCK56 / N2 / NCFM).